A 293-amino-acid polypeptide reads, in one-letter code: Probable endonuclease 4 (293 aa).

Residues His78, His118, Glu154, Asp188, His191, His225, Asp238, His240, and Glu270 each contribute to the Zn(2+) site.

It belongs to the AP endonuclease 2 family. Requires Zn(2+) as cofactor.

The enzyme catalyses Endonucleolytic cleavage to 5'-phosphooligonucleotide end-products.. Endonuclease IV plays a role in DNA repair. It cleaves phosphodiester bonds at apurinic or apyrimidinic (AP) sites, generating a 3'-hydroxyl group and a 5'-terminal sugar phosphate. In Vibrio vulnificus (strain YJ016), this protein is Probable endonuclease 4.